Consider the following 416-residue polypeptide: UDP-N-acetylmuramoylalanine--D-glutamate ligase (416 aa).

108 to 114 serves as a coordination point for ATP; that stretch reads GTTGKTT.

It belongs to the MurCDEF family.

Its subcellular location is the cytoplasm. The catalysed reaction is UDP-N-acetyl-alpha-D-muramoyl-L-alanine + D-glutamate + ATP = UDP-N-acetyl-alpha-D-muramoyl-L-alanyl-D-glutamate + ADP + phosphate + H(+). It participates in cell wall biogenesis; peptidoglycan biosynthesis. Functionally, cell wall formation. Catalyzes the addition of glutamate to the nucleotide precursor UDP-N-acetylmuramoyl-L-alanine (UMA). In Chlamydia trachomatis serovar A (strain ATCC VR-571B / DSM 19440 / HAR-13), this protein is UDP-N-acetylmuramoylalanine--D-glutamate ligase.